A 30-amino-acid polypeptide reads, in one-letter code: Pyrrole-2-carboxylate oxygenase (30 aa).

Homotrimer. It depends on FAD as a cofactor.

The catalysed reaction is pyrrole-2-carboxylate + NADH + O2 + H(+) = 5-hydroxypyrrole-2-carboxylate + NAD(+) + H2O. Its function is as follows. Monooxygenase that initiates the degradation of pyrrole-2-carboxylate, which allows Arthrobacter sp. strain Py1 to grow on pyrrole-2-carboxylate as sole carbon, nitrogen, and energy source. To a lesser extent, can also use pyrrole, pyrrole-2-aldehyde, and indole-2-carboxylate as substrate. The sequence is that of Pyrrole-2-carboxylate oxygenase from Arthrobacter sp. (strain Py1).